A 615-amino-acid polypeptide reads, in one-letter code: MLNRYPLWKYVMLIVVIVIGLLYALPNLFGEDPAVQITGARGVAASEQTLIQVQKTLQEEKITAKSVALEEGAILARFDSTDTQLRAREALMGVMGDKYVVALNLAPATPRWLAAIHAEPMKLGLDLRGGVHFLMEVDMDTALGKLQEQNIDSLRSDLREKGIPYTTVRKENNYGLSITFRDAKARDEAIAYLSKRHPDLVISSQGSNQLRAVMSDARLSEAREYAVQQNINILRNRVNQLGVAEPVVQRQGADRIVVELPGIQDTARAKEILGATATLEFRLVNTNVDQAAAASGRVPGDSEVKQTREGQPVVLYKRVILTGDHITDSTSSQDEYNQPQVNISLDSAGGNIMSNFTKDNIGKPMATLFVEYKDSGKKDANGRAVLVKQEEVINIANIQSRLGNSFRITGINNPNEARQLSLLLRAGALIAPIQIVEERTIGPTLGMQNIEQGLEACLAGLLVSILFMIIFYKKFGLIATSALIANLILIVGIMSLLPGATLSMPGIAGIVLTLAVAVDANVLINERIKEELSNGRTVQQAIDEGYRGAFSSIFDANITTLIKVIILYAVGTGAIKGFAITTGIGVATSMFTAIVGTRAIVNLLYGGKRVKKLSI.

6 helical membrane passes run 10–30 (YVML…NLFG), 452–472 (QGLE…IIFY), 477–497 (LIAT…MSLL), 504–524 (MPGI…NVLI), 548–570 (GAFS…LYAV), and 585–605 (GVAT…NLLY).

It belongs to the SecD/SecF family. SecD subfamily. Forms a complex with SecF. Part of the essential Sec protein translocation apparatus which comprises SecA, SecYEG and auxiliary proteins SecDF-YajC and YidC.

The protein localises to the cell inner membrane. Functionally, part of the Sec protein translocase complex. Interacts with the SecYEG preprotein conducting channel. SecDF uses the proton motive force (PMF) to complete protein translocation after the ATP-dependent function of SecA. This chain is Protein translocase subunit SecD, found in Shigella flexneri.